A 78-amino-acid chain; its full sequence is Large ribosomal subunit protein bL28 (78 aa).

The tract at residues Met-1 to Ala-21 is disordered.

This sequence belongs to the bacterial ribosomal protein bL28 family.

This Serratia proteamaculans (strain 568) protein is Large ribosomal subunit protein bL28.